A 697-amino-acid chain; its full sequence is uncharacterized protein (697 aa).

Residues 516-545 (ADQSQNDVVALSSRIDRLTQEVVALQNSEK) adopt a coiled-coil conformation.

This is an uncharacterized protein from Callospermophilus lateralis (Golden-mantled ground squirrel).